A 235-amino-acid chain; its full sequence is Large ribosomal subunit protein uL1 (235 aa).

This sequence belongs to the universal ribosomal protein uL1 family. As to quaternary structure, part of the 50S ribosomal subunit.

In terms of biological role, binds directly to 23S rRNA. The L1 stalk is quite mobile in the ribosome, and is involved in E site tRNA release. Functionally, protein L1 is also a translational repressor protein, it controls the translation of the L11 operon by binding to its mRNA. The sequence is that of Large ribosomal subunit protein uL1 from Mycobacterium bovis (strain ATCC BAA-935 / AF2122/97).